Reading from the N-terminus, the 542-residue chain is CTP synthase (542 aa).

Residues Met-1–Leu-264 form an amidoligase domain region. Ser-12 lines the CTP pocket. Ser-12 is a binding site for UTP. Ser-13–Ile-18 is an ATP binding site. Tyr-53 contributes to the L-glutamine binding site. An ATP-binding site is contributed by Asp-70. The Mg(2+) site is built by Asp-70 and Glu-138. CTP contacts are provided by residues Asp-145–Glu-147, Lys-185–Gln-190, and Lys-221. UTP-binding positions include Lys-185–Gln-190 and Lys-221. Lys-237 to Ala-239 provides a ligand contact to ATP. One can recognise a Glutamine amidotransferase type-1 domain in the interval Tyr-298–Lys-541. Gly-359 serves as a coordination point for L-glutamine. Cys-386 (nucleophile; for glutamine hydrolysis) is an active-site residue. Residues Leu-387 to Gln-390, Glu-410, and Arg-467 contribute to the L-glutamine site. Residues His-514 and Glu-516 contribute to the active site.

The protein belongs to the CTP synthase family. Homotetramer.

The catalysed reaction is UTP + L-glutamine + ATP + H2O = CTP + L-glutamate + ADP + phosphate + 2 H(+). It carries out the reaction L-glutamine + H2O = L-glutamate + NH4(+). The enzyme catalyses UTP + NH4(+) + ATP = CTP + ADP + phosphate + 2 H(+). It participates in pyrimidine metabolism; CTP biosynthesis via de novo pathway; CTP from UDP: step 2/2. Allosterically activated by GTP, when glutamine is the substrate; GTP has no effect on the reaction when ammonia is the substrate. The allosteric effector GTP functions by stabilizing the protein conformation that binds the tetrahedral intermediate(s) formed during glutamine hydrolysis. Inhibited by the product CTP, via allosteric rather than competitive inhibition. Its function is as follows. Catalyzes the ATP-dependent amination of UTP to CTP with either L-glutamine or ammonia as the source of nitrogen. Regulates intracellular CTP levels through interactions with the four ribonucleotide triphosphates. This chain is CTP synthase, found in Methanococcus aeolicus (strain ATCC BAA-1280 / DSM 17508 / OCM 812 / Nankai-3).